A 522-amino-acid polypeptide reads, in one-letter code: Glutamate--cysteine ligase (522 aa).

This sequence belongs to the glutamate--cysteine ligase type 1 family. Type 1 subfamily.

It carries out the reaction L-cysteine + L-glutamate + ATP = gamma-L-glutamyl-L-cysteine + ADP + phosphate + H(+). It participates in sulfur metabolism; glutathione biosynthesis; glutathione from L-cysteine and L-glutamate: step 1/2. The chain is Glutamate--cysteine ligase from Vibrio parahaemolyticus serotype O3:K6 (strain RIMD 2210633).